Reading from the N-terminus, the 308-residue chain is tRNA pseudouridine synthase B (308 aa).

The active-site Nucleophile is Asp-44.

The protein belongs to the pseudouridine synthase TruB family. Type 1 subfamily.

The enzyme catalyses uridine(55) in tRNA = pseudouridine(55) in tRNA. Functionally, responsible for synthesis of pseudouridine from uracil-55 in the psi GC loop of transfer RNAs. The polypeptide is tRNA pseudouridine synthase B (Nitratidesulfovibrio vulgaris (strain DSM 19637 / Miyazaki F) (Desulfovibrio vulgaris)).